Here is a 220-residue protein sequence, read N- to C-terminus: Octanoyltransferase (220 aa).

One can recognise a BPL/LPL catalytic domain in the interval P27 to V208. Substrate-binding positions include R66 to H73, A139 to G141, and G152 to A154. C170 (acyl-thioester intermediate) is an active-site residue.

This sequence belongs to the LipB family.

The protein localises to the cytoplasm. The enzyme catalyses octanoyl-[ACP] + L-lysyl-[protein] = N(6)-octanoyl-L-lysyl-[protein] + holo-[ACP] + H(+). Its pathway is protein modification; protein lipoylation via endogenous pathway; protein N(6)-(lipoyl)lysine from octanoyl-[acyl-carrier-protein]: step 1/2. Its function is as follows. Catalyzes the transfer of endogenously produced octanoic acid from octanoyl-acyl-carrier-protein onto the lipoyl domains of lipoate-dependent enzymes. Lipoyl-ACP can also act as a substrate although octanoyl-ACP is likely to be the physiological substrate. This is Octanoyltransferase from Bordetella parapertussis (strain 12822 / ATCC BAA-587 / NCTC 13253).